Here is a 270-residue protein sequence, read N- to C-terminus: Formamidopyrimidine-DNA glycosylase (270 aa).

Proline 2 functions as the Schiff-base intermediate with DNA in the catalytic mechanism. The active-site Proton donor is glutamate 3. Lysine 57 (proton donor; for beta-elimination activity) is an active-site residue. DNA contacts are provided by histidine 90, arginine 109, and lysine 150. The FPG-type zinc finger occupies glutamine 235–lysine 269. Residue arginine 259 is the Proton donor; for delta-elimination activity of the active site.

The protein belongs to the FPG family. As to quaternary structure, monomer. It depends on Zn(2+) as a cofactor.

The catalysed reaction is Hydrolysis of DNA containing ring-opened 7-methylguanine residues, releasing 2,6-diamino-4-hydroxy-5-(N-methyl)formamidopyrimidine.. It carries out the reaction 2'-deoxyribonucleotide-(2'-deoxyribose 5'-phosphate)-2'-deoxyribonucleotide-DNA = a 3'-end 2'-deoxyribonucleotide-(2,3-dehydro-2,3-deoxyribose 5'-phosphate)-DNA + a 5'-end 5'-phospho-2'-deoxyribonucleoside-DNA + H(+). Involved in base excision repair of DNA damaged by oxidation or by mutagenic agents. Acts as a DNA glycosylase that recognizes and removes damaged bases. Has a preference for oxidized purines, such as 7,8-dihydro-8-oxoguanine (8-oxoG). Has AP (apurinic/apyrimidinic) lyase activity and introduces nicks in the DNA strand. Cleaves the DNA backbone by beta-delta elimination to generate a single-strand break at the site of the removed base with both 3'- and 5'-phosphates. The chain is Formamidopyrimidine-DNA glycosylase from Actinobacillus succinogenes (strain ATCC 55618 / DSM 22257 / CCUG 43843 / 130Z).